The sequence spans 173 residues: ATP-dependent protease subunit HslV (173 aa).

The active site involves Thr2. Residues Gly158, Asp161, and Ser164 each coordinate Na(+).

This sequence belongs to the peptidase T1B family. HslV subfamily. In terms of assembly, a double ring-shaped homohexamer of HslV is capped on each side by a ring-shaped HslU homohexamer. The assembly of the HslU/HslV complex is dependent on binding of ATP.

Its subcellular location is the cytoplasm. The enzyme catalyses ATP-dependent cleavage of peptide bonds with broad specificity.. With respect to regulation, allosterically activated by HslU binding. In terms of biological role, protease subunit of a proteasome-like degradation complex believed to be a general protein degrading machinery. The chain is ATP-dependent protease subunit HslV from Glaesserella parasuis serovar 5 (strain SH0165) (Haemophilus parasuis).